Here is a 418-residue protein sequence, read N- to C-terminus: MALVLHTFDGNKNAFKALIAAEYSGVKVELAKNFQMGVSNKTPEYLKMNPIGKVPILETPDGPVFESNAIARYVTRSKSDNPLYGSSLIEYAHIEQWIDFSATEVDANTGKWLFPRLGFAPYVAVSEEAAIAALKRSLGALNTHLASNTYLVGHSVTLADIVMTCNLYMGFARIMTKNFTSEFPHVERYFWTMVNQPNFKKVMGDVKQADSVPQVQKKAAAPKEQKPKEAKKEAPKEAPKPKAAEKPEEEEEAPKPKPKNPLDLLPPSKMILDEWKRLYSNTKTNFREVAIKGFWDMYDPEGYSLWFCDYKYNDENTVSFVTMNKVGGFLQRMDLCRKYAFGKMLVIGSEPPFKVKGLWLFRGPEIPKFVMDEVYDMELYEWTKVDISDEAQKERVSAMIEDLEPFEGEALLDAKCFK.

One can recognise a GST N-terminal domain in the interval 1–82; that stretch reads MALVLHTFDG…YVTRSKSDNP (82 aa). Residues 87-213 enclose the GST C-terminal domain; it reads SLIEYAHIEQ…GDVKQADSVP (127 aa). Positions 211–265 are disordered; that stretch reads SVPQVQKKAAAPKEQKPKEAKKEAPKEAPKPKAAEKPEEEEEAPKPKPKNPLDLL. The span at 221–246 shows a compositional bias: basic and acidic residues; that stretch reads APKEQKPKEAKKEAPKEAPKPKAAEK. The EF-1-gamma C-terminal domain occupies 258–418; the sequence is PKNPLDLLPP…EALLDAKCFK (161 aa).

As to quaternary structure, EF-1 is composed of four subunits: alpha, beta, delta, and gamma.

In terms of biological role, probably plays a role in anchoring the complex to other cellular components. The polypeptide is Elongation factor 1-gamma 1 (Oryza sativa subsp. japonica (Rice)).